We begin with the raw amino-acid sequence, 802 residues long: Cullin-4 (802 aa).

Composition is skewed to low complexity over residues 1–33 (MNFN…NNNN) and 656–676 (STSS…ASGS). Disordered stretches follow at residues 1 to 43 (MNFN…SLAG) and 656 to 686 (STSS…GGAT). A Cullin neddylation domain is found at 734-794 (DRQYQVDAAI…KEYLCRDPEN (61 aa)). Lysine 748 is covalently cross-linked (Glycyl lysine isopeptide (Lys-Gly) (interchain with G-Cter in NEDD8)).

Belongs to the cullin family. Neddylated. Deneddylated via its interaction with the COP9 signalosome (CSN) complex.

The protein operates within protein modification; protein ubiquitination. Probable core component of cullin-based SCF-like E3 ubiquitin-protein ligase complexes which mediate the ubiquitination and subsequent proteasomal degradation of target proteins. The E3 ubiquitin-protein ligase activity of the complex is dependent on the neddylation of the cullin subunit. This chain is Cullin-4 (culD), found in Dictyostelium discoideum (Social amoeba).